The sequence spans 624 residues: Chaperone protein HtpG (624 aa).

The segment at 1–336 (MKGQETRGFQ…SNDLPLNVSR (336 aa)) is a; substrate-binding. The b stretch occupies residues 337-552 (EILQDSSVTR…ADEMSTQMAK (216 aa)). The c stretch occupies residues 553-624 (LFAAAGQAAP…IRRMNQLLAS (72 aa)).

It belongs to the heat shock protein 90 family. As to quaternary structure, homodimer.

The protein resides in the cytoplasm. Its function is as follows. Molecular chaperone. Has ATPase activity. The protein is Chaperone protein HtpG of Klebsiella pneumoniae subsp. pneumoniae (strain ATCC 700721 / MGH 78578).